Reading from the N-terminus, the 190-residue chain is Potassium-transporting ATPase KdpC subunit (190 aa).

The chain crosses the membrane as a helical span at residues 10-30; sequence TFLFLLLITGGVYPLLTTALG.

The protein belongs to the KdpC family. The system is composed of three essential subunits: KdpA, KdpB and KdpC.

The protein localises to the cell inner membrane. Functionally, part of the high-affinity ATP-driven potassium transport (or Kdp) system, which catalyzes the hydrolysis of ATP coupled with the electrogenic transport of potassium into the cytoplasm. This subunit acts as a catalytic chaperone that increases the ATP-binding affinity of the ATP-hydrolyzing subunit KdpB by the formation of a transient KdpB/KdpC/ATP ternary complex. This chain is Potassium-transporting ATPase KdpC subunit, found in Escherichia fergusonii (strain ATCC 35469 / DSM 13698 / CCUG 18766 / IAM 14443 / JCM 21226 / LMG 7866 / NBRC 102419 / NCTC 12128 / CDC 0568-73).